We begin with the raw amino-acid sequence, 204 residues long: Casparian strip membrane protein 3 (204 aa).

The Cytoplasmic segment spans residues 1 to 41 (MKNESTFIDVPADSSSAMKGKAPLIGVAKDHTASGSGGYNR). The helical transmembrane segment at 42-62 (GLSIFDFLLRLAAIVAASVAA) threads the bilayer. At 63–92 (GTMFTSDETLPFFTQFLQFQAGYDDLPTFQ) the chain is on the extracellular side. A helical transmembrane segment spans residues 93 to 113 (FFVISMSLVSGYIVLSLPISV). At 114–125 (VTIVRPLAAAPR) the chain is on the cytoplasmic side. Residues 126–146 (LLLLVLDTAVMGLTMAAASSA) form a helical membrane-spanning segment. Residues 147 to 204 (AAISYVAHNGNQNTNWLPICQQFGDFCQKTSGGCGLFLCRRRVFHDPGCPLRSRSQRH) lie on the Extracellular side of the membrane.

This sequence belongs to the Casparian strip membrane proteins (CASP) family. As to quaternary structure, homodimer and heterodimers.

The protein resides in the cell membrane. Functionally, regulates membrane-cell wall junctions and localized cell wall deposition. Required for establishment of the Casparian strip membrane domain (CSD) and the subsequent formation of Casparian strips, a cell wall modification of the root endodermis that determines an apoplastic barrier between the intraorganismal apoplasm and the extraorganismal apoplasm and prevents lateral diffusion. The polypeptide is Casparian strip membrane protein 3 (Raphanus sativus (Radish)).